The primary structure comprises 139 residues: Holo-[acyl-carrier-protein] synthase (139 aa).

The Mg(2+) site is built by Asp-8 and Glu-61.

Belongs to the P-Pant transferase superfamily. AcpS family. Requires Mg(2+) as cofactor.

It is found in the cytoplasm. It carries out the reaction apo-[ACP] + CoA = holo-[ACP] + adenosine 3',5'-bisphosphate + H(+). In terms of biological role, transfers the 4'-phosphopantetheine moiety from coenzyme A to a Ser of acyl-carrier-protein. In Bradyrhizobium diazoefficiens (strain JCM 10833 / BCRC 13528 / IAM 13628 / NBRC 14792 / USDA 110), this protein is Holo-[acyl-carrier-protein] synthase.